The following is a 246-amino-acid chain: Probable septum site-determining protein MinC (246 aa).

This sequence belongs to the MinC family. In terms of assembly, interacts with MinD and FtsZ.

Cell division inhibitor that blocks the formation of polar Z ring septums. Rapidly oscillates between the poles of the cell to destabilize FtsZ filaments that have formed before they mature into polar Z rings. Prevents FtsZ polymerization. This is Probable septum site-determining protein MinC from Pseudomonas syringae pv. syringae (strain B728a).